We begin with the raw amino-acid sequence, 634 residues long: Probable potassium transport system protein Kup (634 aa).

12 helical membrane-spanning segments follow: residues 21 to 41 (IILSAIGVVFGDIGTSPLYTL), 58 to 78 (VLGILSLIFWAMMLVVTIKYV), 110 to 130 (IYIVGILGIFGTSLFFGDGII), 148 to 168 (PHMKAFVVPITLAVLILLFLC), 180 to 200 (FGPITFLWFIAIGVVGVYNII), 217 to 237 (FFLEHGWHSMFVLGAVVLAVT), 258 to 278 (WMYVVLPMLALNYLGQGALVL), 296 to 316 (GLYPMIALATAAAVIASQALI), 348 to 368 (IYVPTVNWTLLMLVILTVIGF), 377 to 397 (AYGVAVTGTMMITTVLMIIYA), 408 to 428 (LLMIAIVFIAVDGAFFYANII), and 432 to 452 (DGAWFPLLLGVVIFTFMRTWL).

The protein belongs to the HAK/KUP transporter (TC 2.A.72) family.

It localises to the cell inner membrane. It catalyses the reaction K(+)(in) + H(+)(in) = K(+)(out) + H(+)(out). Transport of potassium into the cell. Likely operates as a K(+):H(+) symporter. The polypeptide is Probable potassium transport system protein Kup (Xylella fastidiosa (strain Temecula1 / ATCC 700964)).